The primary structure comprises 165 residues: Transcription elongation factor A protein-like 1 (165 aa).

2 disordered regions span residues 1–66 and 89–124; these read MENS…LLPE and IPME…GDIH. The segment covering 33-60 has biased composition (acidic residues); it reads CSEDDQSSEDLSSEEQSSDEEFFPEELL. The segment covering 101–124 has biased composition (basic and acidic residues); the sequence is HKLEEGSFKERLARSRPQFRGDIH.

It belongs to the TFS-II family. TFA subfamily.

The protein localises to the nucleus. In terms of biological role, may be involved in transcriptional regulation. Modulates various viral and cellular promoters in a promoter context-dependent manner. Does not bind DNA directly. The polypeptide is Transcription elongation factor A protein-like 1 (Rattus norvegicus (Rat)).